Here is a 39-residue protein sequence, read N- to C-terminus: Protein disulfide-isomerase A3 (39 aa).

Belongs to the protein disulfide isomerase family. As to quaternary structure, part of the major histocompatibility complex class I (MHC I) peptide loading complex composed of TAP1, TAP2, B2M, MHC heavy chain, TAPBP, PDIA3, and CALR. Interacts with ERP27 and CANX. Interacts with SERPINA2 and with SERPINA1. Interacts with ATP2A2. In terms of processing, within the major histocompatibility complex class I (MHC I) peptide loading complex forms reversible disulfide-linked heterodimers with TAPBP as part of its protein folding chaperone activity. This is essential to assist the dynamic assembly of the MHC I complex with high affinity antigens in the endoplasmic reticulum. Post-translationally, phosphorylated. Predominantly expressed in liver. Low in brain, testis and colon. Not detectable in pancreas and skeletal muscle.

It is found in the endoplasmic reticulum. The protein resides in the endoplasmic reticulum lumen. It localises to the melanosome. It catalyses the reaction Catalyzes the rearrangement of -S-S- bonds in proteins.. Protein disulfide isomerase that catalyzes the formation, isomerization, and reduction or oxidation of disulfide bonds in client proteins and functions as a protein folding chaperone. Core component of the major histocompatibility complex class I (MHC I) peptide loading complex where it functions as an essential folding chaperone for TAPBP. Through TAPBP, assists the dynamic assembly of the MHC I complex with high affinity antigens in the endoplasmic reticulum. Therefore, plays a crucial role in the presentation of antigens to cytotoxic T cells in adaptive immunity. The sequence is that of Protein disulfide-isomerase A3 (PDIA3) from Papio hamadryas (Hamadryas baboon).